The sequence spans 570 residues: Grayanic acid biosynthesis cluster cytochrome P450 monooxygenase (570 aa).

Residues 9–29 form a helical membrane-spanning segment; sequence ILTIFWLPIAAAXLYGAGLAI. The N-linked (GlcNAc...) asparagine glycan is linked to Asn-191. Cys-510 contacts heme.

This sequence belongs to the cytochrome P450 family. The cofactor is heme.

It localises to the membrane. It functions in the pathway secondary metabolite biosynthesis. Functionally, non-reducing polyketide synthase; part of the gene cluster that mediates the biosynthesis of orcinol depsidone grayanic acid (GRA), the only major secondary metabolite known in C.grayi. The first step consists in the ring and depside synthesis by PKS16 leading to 4-O-demethylsphaerophorin, involving different orcinol-like rings, one with acetyl CoA and the other with octanoyl CoA as the starter. Further depsidone formation by the GRA cluster-specific cytochrome P450 leads to 4-O-demethylgrayanic acid. Finally, the cluster specific O-methyltransferase probably converts the 4-O-demethylgrayanic acid into grayanic acid. This chain is Grayanic acid biosynthesis cluster cytochrome P450 monooxygenase, found in Cladonia grayi (Gray's cup lichen).